Here is a 1080-residue protein sequence, read N- to C-terminus: DNA-directed RNA polymerase subunit beta C-terminal section (1080 aa).

Belongs to the RNA polymerase beta chain family. As to quaternary structure, in plastids the minimal PEP RNA polymerase catalytic core is composed of four subunits: alpha, beta, beta', and beta''. When a (nuclear-encoded) sigma factor is associated with the core the holoenzyme is formed, which can initiate transcription.

It is found in the plastid. Its subcellular location is the chloroplast. It carries out the reaction RNA(n) + a ribonucleoside 5'-triphosphate = RNA(n+1) + diphosphate. Functionally, DNA-dependent RNA polymerase catalyzes the transcription of DNA into RNA using the four ribonucleoside triphosphates as substrates. The chain is DNA-directed RNA polymerase subunit beta C-terminal section (rpoB2) from Stigeoclonium helveticum (Green alga).